The primary structure comprises 300 residues: Protein FANTASTIC FOUR 4 (300 aa).

Residues 30–56 (PQLSTPLKSHFQNSSIAPQDNPITINA) show a composition bias toward polar residues. 3 disordered regions span residues 30–104 (PQLS…SPSS), 142–170 (TMET…LPPP), and 227–264 (TETK…KEEE). Composition is skewed to low complexity over residues 58–88 (SLPS…NSSS) and 142–151 (TMETRTTSTT). Residues 166 to 217 (SLPPPLTSMIGFDCIEVKSHRENGRLVMMATRPPPRNRCLQDRSNGCVRLAI) enclose the FAF domain. A compositionally biased stretch (acidic residues) spans 233 to 262 (KEEEEEETIETVRDNEEEIPEYKEEEEEKE).

Belongs to the fantastic four family. In terms of tissue distribution, expressed in the shoot apex and young siliques. Detected in provascular and vascular tissue, but not in the vegetative meristem. In inflorescences, restricted to the base of the flower and to the vasculature of the stem and the pedicels, but absent from young flowers. Detected in the center of the inflorescence meristem.

Functionally, regulates the size of the shoot meristem by modulating the CLV3-WUS feedback loop. Can repress WUS but is under negative control by CLV3. This chain is Protein FANTASTIC FOUR 4 (FAF4), found in Arabidopsis thaliana (Mouse-ear cress).